Consider the following 199-residue polypeptide: Octanoyltransferase (199 aa).

The BPL/LPL catalytic domain maps to 27–199 (SNSCDELWLL…FVQYFLTQFK (173 aa)). Residues 66 to 73 (RGGQVTYH), 133 to 135 (SIG), and 146 to 148 (GIA) contribute to the substrate site. Cysteine 164 (acyl-thioester intermediate) is an active-site residue.

The protein belongs to the LipB family.

The protein resides in the cytoplasm. The enzyme catalyses octanoyl-[ACP] + L-lysyl-[protein] = N(6)-octanoyl-L-lysyl-[protein] + holo-[ACP] + H(+). Its pathway is protein modification; protein lipoylation via endogenous pathway; protein N(6)-(lipoyl)lysine from octanoyl-[acyl-carrier-protein]: step 1/2. In terms of biological role, catalyzes the transfer of endogenously produced octanoic acid from octanoyl-acyl-carrier-protein onto the lipoyl domains of lipoate-dependent enzymes. Lipoyl-ACP can also act as a substrate although octanoyl-ACP is likely to be the physiological substrate. The protein is Octanoyltransferase of Legionella pneumophila (strain Corby).